Reading from the N-terminus, the 314-residue chain is 4-hydroxy-3-methylbut-2-enyl diphosphate reductase (314 aa).

[4Fe-4S] cluster is bound at residue cysteine 12. Histidine 41 and histidine 74 together coordinate (2E)-4-hydroxy-3-methylbut-2-enyl diphosphate. Positions 41 and 74 each coordinate dimethylallyl diphosphate. Isopentenyl diphosphate contacts are provided by histidine 41 and histidine 74. Cysteine 96 provides a ligand contact to [4Fe-4S] cluster. Histidine 124 serves as a coordination point for (2E)-4-hydroxy-3-methylbut-2-enyl diphosphate. Histidine 124 provides a ligand contact to dimethylallyl diphosphate. An isopentenyl diphosphate-binding site is contributed by histidine 124. Glutamate 126 functions as the Proton donor in the catalytic mechanism. Residue threonine 167 coordinates (2E)-4-hydroxy-3-methylbut-2-enyl diphosphate. Position 197 (cysteine 197) interacts with [4Fe-4S] cluster. Residues serine 225, serine 226, asparagine 227, and serine 269 each coordinate (2E)-4-hydroxy-3-methylbut-2-enyl diphosphate. Serine 225, serine 226, asparagine 227, and serine 269 together coordinate dimethylallyl diphosphate. The isopentenyl diphosphate site is built by serine 225, serine 226, asparagine 227, and serine 269.

This sequence belongs to the IspH family. The cofactor is [4Fe-4S] cluster.

The enzyme catalyses isopentenyl diphosphate + 2 oxidized [2Fe-2S]-[ferredoxin] + H2O = (2E)-4-hydroxy-3-methylbut-2-enyl diphosphate + 2 reduced [2Fe-2S]-[ferredoxin] + 2 H(+). It carries out the reaction dimethylallyl diphosphate + 2 oxidized [2Fe-2S]-[ferredoxin] + H2O = (2E)-4-hydroxy-3-methylbut-2-enyl diphosphate + 2 reduced [2Fe-2S]-[ferredoxin] + 2 H(+). It functions in the pathway isoprenoid biosynthesis; dimethylallyl diphosphate biosynthesis; dimethylallyl diphosphate from (2E)-4-hydroxy-3-methylbutenyl diphosphate: step 1/1. The protein operates within isoprenoid biosynthesis; isopentenyl diphosphate biosynthesis via DXP pathway; isopentenyl diphosphate from 1-deoxy-D-xylulose 5-phosphate: step 6/6. Catalyzes the conversion of 1-hydroxy-2-methyl-2-(E)-butenyl 4-diphosphate (HMBPP) into a mixture of isopentenyl diphosphate (IPP) and dimethylallyl diphosphate (DMAPP). Acts in the terminal step of the DOXP/MEP pathway for isoprenoid precursor biosynthesis. The polypeptide is 4-hydroxy-3-methylbut-2-enyl diphosphate reductase (Aliivibrio fischeri (strain MJ11) (Vibrio fischeri)).